We begin with the raw amino-acid sequence, 268 residues long: 3-methyl-2-oxobutanoate hydroxymethyltransferase (268 aa).

Mg(2+) is bound by residues Asp44 and Asp83. 3-methyl-2-oxobutanoate is bound by residues 44–45, Asp83, and Lys113; that span reads DS. Glu115 lines the Mg(2+) pocket. Catalysis depends on Glu182, which acts as the Proton acceptor.

It belongs to the PanB family. Homodecamer; pentamer of dimers. It depends on Mg(2+) as a cofactor.

The protein localises to the cytoplasm. It carries out the reaction 3-methyl-2-oxobutanoate + (6R)-5,10-methylene-5,6,7,8-tetrahydrofolate + H2O = 2-dehydropantoate + (6S)-5,6,7,8-tetrahydrofolate. It participates in cofactor biosynthesis; (R)-pantothenate biosynthesis; (R)-pantoate from 3-methyl-2-oxobutanoate: step 1/2. Catalyzes the reversible reaction in which hydroxymethyl group from 5,10-methylenetetrahydrofolate is transferred onto alpha-ketoisovalerate to form ketopantoate. This chain is 3-methyl-2-oxobutanoate hydroxymethyltransferase, found in Synechococcus elongatus (strain ATCC 33912 / PCC 7942 / FACHB-805) (Anacystis nidulans R2).